Here is a 582-residue protein sequence, read N- to C-terminus: MKVRVYNIGGIVSPLEVELTKGVNIYKAPNAYGKTSLAKALVSLLTSAIKPDDLLNVFANSGYVELDLDGRTYYRRIKRVKNKIMESSKLLLDDDRALLLSYFSPENKLLNQIMSGEENVEWFISATSKINELKSKKEEMETKLHNLQAEIDDLNRKHKEAIELQTKIKQIEDEIARLEKEKESDKVLNKTTQTISITNENKLRDIKEKIEVKKRELEDLQNRIARLDQEIKNKESLASPEIRQSYERQLQEINAQLQKITAQRNEAEIEIRLLEKVLDQIRESEKQHLTTCYVCGSHVDPSIWKVRIDVISKELQEKNSLYAGIKKEADELLSKKSEIEKKLKELDQISSEISKLKMSRSELENRIESVKSTIDDLERQRREMEERFNRNAEIYRVYDINDSINKRIEELKKKKDEYEYELAINGIPSTILNKISEKQKELQEVQKMVDDLEKEYMRRLTIAREEFVKIANYLLKELEFDLRAEIDENDRLVVKRNDATLELRKLSSSERTTLALILVLTALKSYFKTPFFIVDESFMTFDQRRFDKIVKYLNSITDYVIITKSDENIELLKETMEPLASS.

28–35 (APNAYGKT) serves as a coordination point for ATP. Positions 243 to 281 (RQSYERQLQEINAQLQKITAQRNEAEIEIRLLEKVLDQI) form a coiled coil. Positions 243 to 351 (RQSYERQLQE…KLKELDQISS (109 aa)) constitute a Zinc-hook domain. Zn(2+) is bound by residues C292 and C295. The stretch at 320 to 351 (SLYAGIKKEADELLSKKSEIEKKLKELDQISS) forms a coiled coil.

The chain is Protein bps2 (bps2) from Acidianus ambivalens (Desulfurolobus ambivalens).